We begin with the raw amino-acid sequence, 411 residues long: LIM domain-binding protein 1 (411 aa).

S2 bears the N-acetylserine mark. T61 carries the post-translational modification Phosphothreonine. S265 and S302 each carry phosphoserine. Disordered regions lie at residues 283–330 (APPA…TFAL) and 367–411 (DAAN…QASQ). The span at 302–318 (SGGSTMSSGGGNTNNSN) shows a compositional bias: low complexity. Positions 336–375 (DVMVVGEPTLMGGEFGDEDERLITRLENTQFDAANGIDDE) constitute an LIM interaction domain (LID) domain.

It belongs to the LDB family. In terms of assembly, interacts with ESR1. Forms homodimers and heterodimers. Interacts with and activates LHX1/LIM1. Interacts with the LIM domains of ISL1 and LMO2. Can assemble in a complex with LMO2 and TAL1/SCL but does not interact with TAL1/SCL directly. Strongly interacts with the LIM2 domain of LMX1A and more weakly with the LIM1 domain. Homodimerization is not required for, and does not effect, LMX1A-binding. Component of a nuclear TAL-1 complex composed at least of CBFA2T3, LDB1, TAL1 and TCF3. Interacts with LHX6 and LHX9. At neuronal promoters, forms a complex with LHX3 involved in the specification of interneurons, in motor neurons, it is displaced by ISL1 to form a ternary complex in which ISL1 contacts both LHX3 and LDB1. Interacts with SLK; leading to negatively regulate SLK kinase activity. Interacts with YWHAZ. Interacts with PRDM1/BLIMP1. Interacts with LMO4. Interacts with RLIM/RNF12; the interaction inhibits the ubiquitination of LMO proteins. Post-translationally, ubiquitinated by RLIM/RNF12, leading to its degradation by the proteasome. Expressed in a wide range of adult tissues including brain, heart, skeletal muscle, colon, thymus, spleen, kidney, liver, small intestine, lung and peripheral blood leukocytes.

The protein resides in the nucleus. Binds to the LIM domain of a wide variety of LIM domain-containing transcription factors. May regulate the transcriptional activity of LIM-containing proteins by determining specific partner interactions. Plays a role in the development of interneurons and motor neurons in cooperation with LHX3 and ISL1. Acts synergistically with LHX1/LIM1 in axis formation and activation of gene expression. Acts with LMO2 in the regulation of red blood cell development, maintaining erythroid precursors in an immature state. This chain is LIM domain-binding protein 1 (LDB1), found in Homo sapiens (Human).